The sequence spans 473 residues: Probable ribonuclease FAU-1 (473 aa).

Belongs to the FAU-1 family.

In terms of biological role, probable RNase involved in rRNA stability through maturation and/or degradation of precursor rRNAs. Binds to RNA in loop regions with AU-rich sequences. The chain is Probable ribonuclease FAU-1 from Hyperthermus butylicus (strain DSM 5456 / JCM 9403 / PLM1-5).